The sequence spans 713 residues: Leucine-rich repeat neuronal protein 2 (713 aa).

The signal sequence occupies residues 1–18 (MRLLVAPLLLAWVAGATA). Residues 19-630 (AVPVVPWHVP…CHRALGDRPG (612 aa)) are Extracellular-facing. The LRRNT domain maps to 20–69 (VPVVPWHVPCPPQCACQIRPWYTPRSSYREATTVDCNDLFLTAVPPALPA). LRR repeat units lie at residues 70–91 (GTQTLLLQSNSIVRVDQSELGY), 94–115 (NLTELDLSQNSFSDARDCDFHA), 118–139 (QLLSLHLEENQLTRLEDHSFAG), 142–163 (SLQELYLNHNQLYRIAPRAFSG), 166–187 (NLLRLHLNSNLLRAIDSRWFEM), 190–211 (NLEILMIGGNKVDAILDMNFRP), 214–235 (NLRSLVLAGMNLREISDYALEG), 238–259 (SLESLSFYDNQLARVPRRALEQ), 262–283 (GLKFLDLNKNPLQRVGPGDFAN), 286–305 (HLKELGLNNMEELVSIDKFA), 311–333 (ELTKLDITNNPRLSFIHPRAFHH), and 336–357 (QMETLMLNNNALSALHQQTVES). A glycan (N-linked (GlcNAc...) asparagine) is linked at N94. Residues 369 to 422 (NPIRCDCVIRWANATGTRVRFIEPQSTLCAEPPDLQRLPVREVPFREMTDHCLP) form the LRRCT domain. N-linked (GlcNAc...) asparagine glycosylation is present at N381. Positions 422–511 (PLISPRSFPP…LVGADTKTVS (90 aa)) constitute an Ig-like C2-type domain. C445 and C497 form a disulfide bridge. N555 and N583 each carry an N-linked (GlcNAc...) asparagine glycan. Residues 631-651 (LIAILALAVLLLAAGLAAHLG) traverse the membrane as a helical segment. The Cytoplasmic portion of the chain corresponds to 652 to 713 (TGQPRKGVGG…TLLPPLSQNS (62 aa)).

Overamplified in malignant gliomas.

It localises to the membrane. The sequence is that of Leucine-rich repeat neuronal protein 2 (LRRN2) from Homo sapiens (Human).